The sequence spans 610 residues: Glutamine--fructose-6-phosphate aminotransferase [isomerizing] (610 aa).

Cys-2 acts as the Nucleophile; for GATase activity in catalysis. The 217-residue stretch at 2–218 folds into the Glutamine amidotransferase type-2 domain; sequence CGIVGAVAQR…EGDVAEMTRR (217 aa). 2 SIS domains span residues 286-426 and 459-600; these read AAEI…QQQR and LAED…VDQP. Catalysis depends on Lys-605, which acts as the For Fru-6P isomerization activity.

Homodimer.

It localises to the cytoplasm. The enzyme catalyses D-fructose 6-phosphate + L-glutamine = D-glucosamine 6-phosphate + L-glutamate. In terms of biological role, catalyzes the first step in hexosamine metabolism, converting fructose-6P into glucosamine-6P using glutamine as a nitrogen source. The polypeptide is Glutamine--fructose-6-phosphate aminotransferase [isomerizing] (Vibrio cholerae serotype O1 (strain ATCC 39315 / El Tor Inaba N16961)).